A 233-amino-acid chain; its full sequence is UPF0758 protein Rcas_0037 (233 aa).

The 123-residue stretch at 107-229 (QIRSPTDAAQ…FVSMRERGLA (123 aa)) folds into the MPN domain. The Zn(2+) site is built by His-178, His-180, and Asp-191. A JAMM motif motif is present at residues 178 to 191 (HNHPSGDPTPSPED).

Belongs to the UPF0758 family.

The chain is UPF0758 protein Rcas_0037 from Roseiflexus castenholzii (strain DSM 13941 / HLO8).